A 762-amino-acid chain; its full sequence is uncharacterized protein (762 aa).

The region spanning 334–542 (IIDILSNYLI…SDEEIAEHIL (209 aa)) is the MCM domain. 384 to 391 (TDPGIGKS) is a binding site for ATP.

This sequence belongs to the MCM family.

This is an uncharacterized protein from Methanocaldococcus jannaschii (strain ATCC 43067 / DSM 2661 / JAL-1 / JCM 10045 / NBRC 100440) (Methanococcus jannaschii).